A 241-amino-acid chain; its full sequence is MAWQMTQLLLLALVAAAWGAQAPRTPRARTDLLNVCMDAKHHKAEPGPEDSLHEQCSPWRKNACCSVNTSIEAHKDISYLYRFNWDHCGKMEPACKRHFIQDTCLYECSPNLGPWIREVNQRWRKERVLGVPLCKEDCQSWWEDCRTSYTCKSNWHKGWNWTSGYNQCPVKAACHRFDFYFPTPAALCNEIWSHSYKVSNYSRGSGRCIQMWFDPFQGNPNEEVARFYAENPTSGSTPQGI.

The first 19 residues, 1–19, serve as a signal peptide directing secretion; that stretch reads MAWQMTQLLLLALVAAAWG. Intrachain disulfides connect cysteine 36–cysteine 64, cysteine 56–cysteine 104, cysteine 65–cysteine 108, cysteine 88–cysteine 174, cysteine 95–cysteine 145, cysteine 134–cysteine 208, cysteine 138–cysteine 188, and cysteine 151–cysteine 168. A glycan (N-linked (GlcNAc...) asparagine) is linked at asparagine 68. Folate is bound by residues aspartate 102, tyrosine 106, 123 to 127, 156 to 161, and serine 195; these read WRKER and HKGWNW. An N-linked (GlcNAc...) asparagine glycan is attached at asparagine 160. The GPI-anchor amidated serine moiety is linked to residue serine 234. Positions 235–241 are cleaved as a propeptide — removed in mature form; it reads GSTPQGI.

Belongs to the folate receptor family. In terms of processing, the secreted form is derived from the membrane-bound form either by cleavage of the GPI anchor, or/and by proteolysis catalyzed by a metalloprotease. In terms of tissue distribution, detected in milk (at protein level).

It localises to the cell membrane. The protein resides in the apical cell membrane. Its subcellular location is the basolateral cell membrane. It is found in the secreted. The protein localises to the cytoplasmic vesicle. It localises to the clathrin-coated vesicle. The protein resides in the endosome. Functionally, binds to folate and reduced folic acid derivatives and mediates delivery of 5-methyltetrahydrofolate and folate analogs into the interior of cells. Has high affinity for folate and folic acid analogs at neutral pH. Exposure to slightly acidic pH after receptor endocytosis triggers a conformation change that strongly reduces its affinity for folates and mediates their release. Required for normal embryonic development and normal cell proliferation. This Bos taurus (Bovine) protein is Folate receptor alpha (FOLR1).